We begin with the raw amino-acid sequence, 215 residues long: Pyrrolidone-carboxylate peptidase (215 aa).

Active-site residues include E80, C143, and H167.

This sequence belongs to the peptidase C15 family. Homotetramer.

It is found in the cytoplasm. The enzyme catalyses Release of an N-terminal pyroglutamyl group from a polypeptide, the second amino acid generally not being Pro.. Its function is as follows. Removes 5-oxoproline from various penultimate amino acid residues except L-proline. The protein is Pyrrolidone-carboxylate peptidase of Yersinia pseudotuberculosis serotype O:3 (strain YPIII).